We begin with the raw amino-acid sequence, 561 residues long: Carbohydrate sulfotransferase 15 (561 aa).

Topologically, residues 1–80 (MRHCINCCIQ…FLRFKKGKRC (80 aa)) are cytoplasmic. Residues 81 to 101 (SLVFGLIIMTLVMASYILSGA) traverse the membrane as a helical; Signal-anchor for type II membrane protein segment. Over 102 to 561 (HQELLISSPF…ADEAFAWKTT (460 aa)) the chain is Lumenal. 263-267 (KCGTT) is a 3'-phosphoadenylyl sulfate binding site. N364 carries an N-linked (GlcNAc...) asparagine glycan. 2 residues coordinate 3'-phosphoadenylyl sulfate: R392 and S400.

The protein belongs to the sulfotransferase 1 family. Homodimer; disulfide-linked (Potential). The relevance of homodimerization is however unsure. May interact with phosphorylated proteins in resting B-cells, including HCK. The cofactor is a divalent metal cation. It depends on glutathione as a cofactor. In terms of processing, glycosylated. Expressed in B-cell-enriched tissues but not in fetal or adult thymus. Expressed in fetal and adult spleen, lymph node, tonsil, bone marrow and peripheral leukocytes. Not expressed in T-cells. In pro-B, pre-B, and mature B-cell lines, it colocalizes with RAG1.

It localises to the golgi apparatus membrane. The enzyme catalyses dermatan 4'-sulfate + n 3'-phosphoadenylyl sulfate = dermatan 4',6'-bissulfate + n adenosine 3',5'-bisphosphate + n H(+). It catalyses the reaction chondroitin 4'-sulfate + n 3'-phosphoadenylyl sulfate = chondroitin 4',6'-bissulfate + n adenosine 3',5'-bisphosphate + n H(+). Inhibited by phenyl beta-GalNAc(4,6-SO(4)). Sulfotransferase that transfers sulfate from 3'-phosphoadenosine 5'-phosphosulfate (PAPS) to the C-6 hydroxyl group of the GalNAc 4-sulfate residue of chondroitin sulfate A and forms chondroitin sulfate E containing GlcA-GalNAc(4,6-SO(4)) repeating units. It also transfers sulfate to a unique non-reducing terminal sequence, GalNAc(4SO4)-GlcA(2SO4)-GalNAc(6SO4), to yield a highly sulfated structure similar to the structure found in thrombomodulin chondroitin sulfate. May also act as a B-cell receptor involved in BCR ligation-mediated early activation that mediate regulatory signals key to B-cell development and/or regulation of B-cell-specific RAG expression; however such results are unclear in vivo. The protein is Carbohydrate sulfotransferase 15 (CHST15) of Homo sapiens (Human).